A 481-amino-acid polypeptide reads, in one-letter code: Heat stress transcription factor A-1b (481 aa).

A compositionally biased stretch (low complexity) spans 1–16; the sequence is MESVPESVPSPNSNTP. The segment at 1–23 is disordered; sequence MESVPESVPSPNSNTPSIPPPVN. A DNA-binding region spans residues 25–119; the sequence is VPPFLSKTYD…LLKSIVRRKP (95 aa). The hydrophobic repeat HR-A/B stretch occupies residues 138-204; it reads ACVEVGKFGI…QMMSFLAKAV (67 aa). Positions 213-227 are enriched in polar residues; the sequence is LVQQNNNDGNRQIPG. Residues 213-244 are disordered; it reads LVQQNNNDGNRQIPGSNKKRRLPVDEQENRGD. The Nuclear localization signal motif lies at 229–233; the sequence is NKKRR. Basic and acidic residues predominate over residues 234-243; the sequence is LPVDEQENRG. The AHA motif lies at 418–427; the sequence is DPFWEQFFSV. A Nuclear export signal motif is present at residues 467-474; that stretch reads LTEQMGLL.

This sequence belongs to the HSF family. Class A subfamily. In terms of assembly, homotrimer. Binds to HSBP. In terms of processing, exhibits temperature-dependent phosphorylation.

It localises to the cytoplasm. The protein localises to the nucleus. Its function is as follows. Transcriptional activator that specifically binds DNA sequence 5'-AGAAnnTTCT-3' known as heat shock promoter elements (HSE). The protein is Heat stress transcription factor A-1b (HSFA1B) of Arabidopsis thaliana (Mouse-ear cress).